The primary structure comprises 449 residues: Bifunctional protein GlmU (449 aa).

Residues 1 to 226 (MNNIHAIILA…KFEVLGVNDK (226 aa)) form a pyrophosphorylase region. UDP-N-acetyl-alpha-D-glucosamine-binding positions include 9 to 12 (LAAG), lysine 23, glutamine 73, 78 to 79 (GT), 100 to 102 (YGD), glycine 137, glutamate 151, asparagine 166, and asparagine 224. A Mg(2+)-binding site is contributed by aspartate 102. Residue asparagine 224 coordinates Mg(2+). The segment at 227–247 (VQLAELERLFQKDQAIQFMKQ) is linker. The tract at residues 248–449 (GLGLKDPTRF…QKNLKYRSKK (202 aa)) is N-acetyltransferase. UDP-N-acetyl-alpha-D-glucosamine contacts are provided by arginine 330 and lysine 348. The active-site Proton acceptor is the histidine 360. Residues tyrosine 363 and asparagine 374 each contribute to the UDP-N-acetyl-alpha-D-glucosamine site. Acetyl-CoA is bound by residues alanine 377, 383 to 384 (NY), serine 402, alanine 420, and arginine 437.

The protein in the N-terminal section; belongs to the N-acetylglucosamine-1-phosphate uridyltransferase family. In the C-terminal section; belongs to the transferase hexapeptide repeat family. Homotrimer. It depends on Mg(2+) as a cofactor.

It localises to the cytoplasm. The enzyme catalyses alpha-D-glucosamine 1-phosphate + acetyl-CoA = N-acetyl-alpha-D-glucosamine 1-phosphate + CoA + H(+). It catalyses the reaction N-acetyl-alpha-D-glucosamine 1-phosphate + UTP + H(+) = UDP-N-acetyl-alpha-D-glucosamine + diphosphate. It functions in the pathway nucleotide-sugar biosynthesis; UDP-N-acetyl-alpha-D-glucosamine biosynthesis; N-acetyl-alpha-D-glucosamine 1-phosphate from alpha-D-glucosamine 6-phosphate (route II): step 2/2. It participates in nucleotide-sugar biosynthesis; UDP-N-acetyl-alpha-D-glucosamine biosynthesis; UDP-N-acetyl-alpha-D-glucosamine from N-acetyl-alpha-D-glucosamine 1-phosphate: step 1/1. The protein operates within bacterial outer membrane biogenesis; LPS lipid A biosynthesis. In terms of biological role, catalyzes the last two sequential reactions in the de novo biosynthetic pathway for UDP-N-acetylglucosamine (UDP-GlcNAc). The C-terminal domain catalyzes the transfer of acetyl group from acetyl coenzyme A to glucosamine-1-phosphate (GlcN-1-P) to produce N-acetylglucosamine-1-phosphate (GlcNAc-1-P), which is converted into UDP-GlcNAc by the transfer of uridine 5-monophosphate (from uridine 5-triphosphate), a reaction catalyzed by the N-terminal domain. This chain is Bifunctional protein GlmU, found in Vesicomyosocius okutanii subsp. Calyptogena okutanii (strain HA).